We begin with the raw amino-acid sequence, 316 residues long: 2,3-dihydroxyphenylpropionate/2,3-dihydroxicinnamic acid 1,2-dioxygenase (316 aa).

His-115 (proton donor) is an active-site residue. His-179 serves as the catalytic Proton acceptor.

It belongs to the LigB/MhpB extradiol dioxygenase family. As to quaternary structure, homotetramer. Requires Fe(2+) as cofactor.

The enzyme catalyses 3-(2,3-dihydroxyphenyl)propanoate + O2 = (2Z,4E)-2-hydroxy-6-oxonona-2,4-dienedioate + H(+). The catalysed reaction is (2E)-3-(2,3-dihydroxyphenyl)prop-2-enoate + O2 = (2Z,4E,7E)-2-hydroxy-6-oxonona-2,4,7-trienedioate + H(+). The protein operates within aromatic compound metabolism; 3-phenylpropanoate degradation. Catalyzes the non-heme iron(II)-dependent oxidative cleavage of 2,3-dihydroxyphenylpropionic acid and 2,3-dihydroxicinnamic acid into 2-hydroxy-6-ketononadienedioate and 2-hydroxy-6-ketononatrienedioate, respectively. The chain is 2,3-dihydroxyphenylpropionate/2,3-dihydroxicinnamic acid 1,2-dioxygenase from Paraburkholderia xenovorans (strain LB400).